A 310-amino-acid chain; its full sequence is Carbamate kinase 1 (310 aa).

It belongs to the carbamate kinase family.

The protein localises to the cytoplasm. It carries out the reaction hydrogencarbonate + NH4(+) + ATP = carbamoyl phosphate + ADP + H2O + H(+). It participates in metabolic intermediate metabolism; carbamoyl phosphate degradation; CO(2) and NH(3) from carbamoyl phosphate: step 1/1. The sequence is that of Carbamate kinase 1 (arcC1) from Staphylococcus aureus (strain bovine RF122 / ET3-1).